The following is an 84-amino-acid chain: Double gene block protein 2 (84 aa).

Residues 1–4 lie on the Lumenal side of the membrane; it reads MPSA. Residues 5–25 traverse the membrane as a helical segment; the sequence is NLHPIVLTGVIGLMLLIRLRC. Over 26–30 the chain is Cytoplasmic; it reads TFTST. The helical transmembrane segment at 31-51 threads the bilayer; sequence FSLPPLVTLNQIIALSFCGLL. The Lumenal portion of the chain corresponds to 52 to 84; sequence LNSISRAERACYYNYSVDSSKQQHISISTPNGK.

The protein belongs to the carmovirus double gene block protein 2 family.

It localises to the host endoplasmic reticulum membrane. Cell-to-cell movement function. This is Double gene block protein 2 from Carnation mottle virus (isolate China/Shanghai) (CarMV).